The chain runs to 202 residues: LexA repressor (202 aa).

Positions 28–48 form a DNA-binding region, H-T-H motif; it reads RAEIAQRLGFRSPNAAEEHLK. Residues Ser-119 and Lys-156 each act as for autocatalytic cleavage activity in the active site.

The protein belongs to the peptidase S24 family. Homodimer.

The enzyme catalyses Hydrolysis of Ala-|-Gly bond in repressor LexA.. Functionally, represses a number of genes involved in the response to DNA damage (SOS response), including recA and lexA. Binds to the 16 bp palindromic sequence 5'-CTGTATATATATACAG-3'. In the presence of single-stranded DNA, RecA interacts with LexA causing an autocatalytic cleavage which disrupts the DNA-binding part of LexA, leading to derepression of the SOS regulon and eventually DNA repair. The chain is LexA repressor from Cronobacter sakazakii (strain ATCC BAA-894) (Enterobacter sakazakii).